The primary structure comprises 556 residues: Set1/Ash2 histone methyltransferase complex subunit ASH2 (556 aa).

Residues 1–19 (MEDSQMDTSSPTESSSEVN) show a composition bias toward polar residues. The interval 1-27 (MEDSQMDTSSPTESSSEVNFTAEEDKS) is disordered. A PHD-type zinc finger spans residues 34–90 (AGVCYCGKERNLNIVELLCATCSRWVHETCVSYQLGKGKLLPFITNYVFVCKNCSAS). 8 residues coordinate Zn(2+): cysteine 37, cysteine 39, cysteine 52, cysteine 55, histidine 60, cysteine 63, cysteine 84, and cysteine 87. The interval 216 to 251 (ASLSKNNRQKRKFPGTDSGPTGKKGRPSSDITANVK) is disordered. One can recognise a B30.2/SPRY domain in the interval 288 to 510 (SSDWAGKPIP…VSVNFGPAFK (223 aa)).

As to quaternary structure, core component of several methyltransferase-containing complexes. Component of the SET1C/COMPASS complex, composed at least of the catalytic subunit Set1, wds/WDR5, Wdr82, Rbbp5, ash2, Cfp1/CXXC1, hcf and Dpy-30L1. Component of the MLL3/4 (Histone-lysine N-methyltransferase/demethylase TRR) complex composed at least of the catalytic subunit trr, ash2, Rbbp5, Dpy-30L1, wds, hcf, ptip, Pa1, Utx, Lpt and Ncoa6. Interacts with hcf. Interacts with trr. In terms of assembly, interacts (via B30.2/SPRY domain) with sktl; the interaction is direct. In larvae and pupae, expressed in imaginal disks, salivary gland and fat body cells. No expression detected in central nervous system (at protein level).

Its subcellular location is the nucleus. It is found in the chromosome. Transcriptional regulator. Regulates a number of genes involved in wing development including activation of net and bs and repression of rho and kni and controls vein-intervein patterning during wing development. Required for correct expression of a number of homeotic genes including Scr in the first leg imaginal disk and Ubx in the third leg imaginal disk and haltere disks. Required for stabilization of the histone-lysine N-methyltransferase trr and for trimethylation of 'Lys-4' of histone H3. Together with sktl probably plays a role in maintenance of transcriptionally active chromatin through down-regulation of histone H1 hyperphosphorylation. This is Set1/Ash2 histone methyltransferase complex subunit ASH2 from Drosophila melanogaster (Fruit fly).